The chain runs to 94 residues: uncharacterized protein (94 aa).

The tract at residues 1-23 is disordered; sequence MVLLAGTRPQGGEARCMIPPPPS.

This is an uncharacterized protein from Homo sapiens (Human).